The sequence spans 452 residues: Phosphoglucosamine mutase (452 aa).

The Phosphoserine intermediate role is filled by serine 101. The Mg(2+) site is built by serine 101, aspartate 241, aspartate 243, and aspartate 245. Residue serine 101 is modified to Phosphoserine.

The protein belongs to the phosphohexose mutase family. Mg(2+) serves as cofactor. Post-translationally, activated by phosphorylation.

It carries out the reaction alpha-D-glucosamine 1-phosphate = D-glucosamine 6-phosphate. Catalyzes the conversion of glucosamine-6-phosphate to glucosamine-1-phosphate. The protein is Phosphoglucosamine mutase of Lactococcus lactis subsp. cremoris (strain SK11).